The following is a 265-amino-acid chain: Undecaprenyl-diphosphatase (265 aa).

Helical transmembrane passes span 38 to 58 (SDMF…IIYW), 80 to 100 (LIVA…LGFE), 107 to 127 (PIAW…WAAA), 135 to 155 (ITWL…VFPG), 175 to 195 (AAAT…ASGY), 213 to 233 (ALAI…KWLL), and 244 to 264 (FAIY…SGLI).

The protein belongs to the UppP family.

The protein resides in the cell inner membrane. It carries out the reaction di-trans,octa-cis-undecaprenyl diphosphate + H2O = di-trans,octa-cis-undecaprenyl phosphate + phosphate + H(+). In terms of biological role, catalyzes the dephosphorylation of undecaprenyl diphosphate (UPP). Confers resistance to bacitracin. This is Undecaprenyl-diphosphatase from Rhizobium etli (strain CIAT 652).